Here is a 1522-residue protein sequence, read N- to C-terminus: Adhesion G protein-coupled receptor B3 (1522 aa).

The signal sequence occupies residues 1–25 (MKAVRNLLIYIFSTYLLVMFGFNAA). Residues 26-880 (QDFWCSTLVK…MESSGTPSVT (855 aa)) are Extracellular-facing. One can recognise a CUB domain in the interval 30 to 159 (CSTLVKGVIY…KSFFEFLVLN (130 aa)). Residues N51, N54, N82, N105, and N241 are each glycosylated (N-linked (GlcNAc...) asparagine). TSP type-1 domains are found at residues 291 to 343 (ESGV…ALCP), 345 to 398 (HGVW…ALCP), 400 to 453 (DGQW…PECT), and 455 to 508 (NGQW…QRCP). 14 cysteine pairs are disulfide-bonded: C303-C336, C307-C342, C318-C326, C357-C392, C361-C397, C372-C382, C412-C447, C416-C452, C427-C437, C467-C502, C471-C507, C482-C492, C514-C549, and C537-C567. N-linked (GlcNAc...) asparagine glycosylation is present at N337. N-linked (GlcNAc...) asparagine glycosylation is present at N418. N-linked (GlcNAc...) asparagine glycosylation is present at N540. Phosphoserine is present on S619. Residues N625, N779, N812, and N828 are each glycosylated (N-linked (GlcNAc...) asparagine). In terms of domain architecture, GAIN-B spans 693–869 (QNSYLMTGNV…AILAQQPREI (177 aa)). 2 disulfides stabilise this stretch: C819-C851 and C839-C853. The tract at residues 819 to 869 (CVLWDDSKSNESLGTWSTQGCKTVLTDASHTKCLCDRLSTFAILAQQPREI) is GPS. A helical transmembrane segment spans residues 881-901 (LIVGSGLSCLALITLAVVYAA). At 902–910 (LWRYIRSER) the chain is on the cytoplasmic side. A helical transmembrane segment spans residues 911-931 (SIILINFCLSIISSNILILVG). The Extracellular segment spans residues 932-939 (QTQTHNKS). An N-linked (GlcNAc...) asparagine glycan is attached at N937. Residues 940 to 960 (ICTTTTAFLHFFFLASFCWVL) form a helical membrane-spanning segment. Residues 961–981 (TEAWQSYMAVTGKIRTRLIRK) lie on the Cytoplasmic side of the membrane. Residues 982-1002 (RFLCLGWGLPALVVATSVGFT) traverse the membrane as a helical segment. Residues 1003–1023 (RTKGYGTDHYCWLSLEGGLLY) lie on the Extracellular side of the membrane. The chain crosses the membrane as a helical span at residues 1024–1044 (AFVGPAAAVVLVNMVIGILVF). Over 1045 to 1098 (NKLVSRDGILDKKLKHRAGQMSEPHSGLTLKCAKCGVVSTTALSATTASNAMAS) the chain is Cytoplasmic. A helical membrane pass occupies residues 1099–1119 (LWSSCVVLPLLALTWMSAVLA). The Extracellular portion of the chain corresponds to 1120–1125 (MTDKRS). A helical transmembrane segment spans residues 1126 to 1146 (ILFQILFAVFDSLQGFVIVMV). Over 1147-1522 (HCILRREVQD…VQEGDFQTEV (376 aa)) the chain is Cytoplasmic. S1220 and S1411 each carry phosphoserine.

Belongs to the G-protein coupled receptor 2 family. Adhesion G-protein coupled receptor (ADGR) subfamily. Forms a heterodimer, consisting of a large extracellular region non-covalently linked to a seven-transmembrane moiety. Interacts (via its TSRs) with C1QL1, C1QL2, C1QL3 and C1QL4. Interacts via (C-terminus) with ELMO1, ELMO2 and ELMO3. In terms of processing, the endogenous protein is proteolytically cleaved into 2 subunits, an extracellular subunit and a seven-transmembrane subunit. Brain-specific expression.

Its subcellular location is the cell membrane. Its function is as follows. Receptor that plays a role in the regulation of synaptogenesis and dendritic spine formation at least partly via interaction with ELMO1 and RAC1 activity. Promotes myoblast fusion through ELMO/DOCK1. This is Adhesion G protein-coupled receptor B3 (Adgrb3) from Mus musculus (Mouse).